A 429-amino-acid chain; its full sequence is Trigger factor (429 aa).

Residues Gly-164–Pro-249 form the PPIase FKBP-type domain.

It belongs to the FKBP-type PPIase family. Tig subfamily.

It is found in the cytoplasm. The enzyme catalyses [protein]-peptidylproline (omega=180) = [protein]-peptidylproline (omega=0). In terms of biological role, involved in protein export. Acts as a chaperone by maintaining the newly synthesized protein in an open conformation. Functions as a peptidyl-prolyl cis-trans isomerase. This Anaeromyxobacter dehalogenans (strain 2CP-C) protein is Trigger factor.